Reading from the N-terminus, the 334-residue chain is MFGKPDKMDVRCHSDAEAARVSKNAHKESRESKGAEGNLPAAFLKEPQGAFSASGAAEDCNKSKSNSAADPDYCRRILVRDAKGSIREIILPKGLDLDRPKRTRTSFTAEQLYRLEMEFQRCQYVVGRERTELARQLNLSETQVKVWFQNRRTKQKKDQGKDSELRSVVSETAATCSVLRLLEQGRLLSPPGLPALLPPCATGALGSALRGPSLPALGAGAAAGSAAAAAAAAPGPAGAASPHPPAVGGAPGPGPAGPGGLHAGAPAAGHSLFSLPVPSLLGSVASRLSSAPLTMAGSLAGNLQELSARYLSSSAFEPYSRTNNKEGAEKKALD.

Basic and acidic residues predominate over residues 1 to 34 (MFGKPDKMDVRCHSDAEAARVSKNAHKESRESKG). The segment at 1–41 (MFGKPDKMDVRCHSDAEAARVSKNAHKESRESKGAEGNLPA) is disordered. The homeobox DNA-binding region spans 100-159 (PKRTRTSFTAEQLYRLEMEFQRCQYVVGRERTELARQLNLSETQVKVWFQNRRTKQKKDQ). 2 disordered regions span residues 234–263 (PGPA…GLHA) and 314–334 (SAFE…KALD). Over residues 323 to 334 (NNKEGAEKKALD) the composition is skewed to basic and acidic residues.

It belongs to the EMX homeobox family.

Its subcellular location is the nucleus. In terms of biological role, transcription factor that may function in dorsoventral specification of the forebrain. Required for axon guidance and major tract formation in the developing forebrain. May contribute to the differentiation of the neuroretina, pigmented epithelium and optic stalk. In Homo sapiens (Human), this protein is Ventral anterior homeobox 1 (VAX1).